A 621-amino-acid chain; its full sequence is Cryptochrome-1 (621 aa).

Residues valine 3–leucine 132 form the Photolyase/cryptochrome alpha/beta domain. 3 short sequence motifs (LIR) span residues asparagine 50–phenylalanine 54, aspartate 82–leucine 87, and lysine 151–leucine 156. Serine 252 contributes to the FAD binding site. 4 short sequence motifs (LIR) span residues leucine 255–leucine 260, aspartate 271–valine 276, serine 285–leucine 290, and threonine 335–tryptophan 339. Glutamine 289 contacts FAD. Position 355 (histidine 355) interacts with FAD. The short motif at lysine 379–leucine 384 is the LIR 8 element. Aspartate 387–aspartate 389 serves as a coordination point for FAD. 5 short sequence motifs (LIR) span residues glycine 395–leucine 400, histidine 411–valine 416, arginine 430–valine 435, glutamine 486–leucine 491, and serine 492–leucine 497. Residues glutamine 581 to asparagine 621 are disordered.

This sequence belongs to the DNA photolyase class-1 family. In terms of assembly, component of the circadian core oscillator, which includes the CRY proteins, CLOCK or NPAS2, BMAL1 or BMAL2, CSNK1E, and the PER proteins. FAD serves as cofactor. Requires (6R)-5,10-methylene-5,6,7,8-tetrahydrofolate as cofactor. Expressed in the pineal gland.

It localises to the cytoplasm. It is found in the nucleus. In terms of biological role, transcriptional repressor which forms a core component of the circadian clock. The circadian clock, an internal time-keeping system, regulates various physiological processes through the generation of approximately 24 hour circadian rhythms in gene expression, which are translated into rhythms in metabolism and behavior. It is derived from the Latin roots 'circa' (about) and 'diem' (day) and acts as an important regulator of a wide array of physiological functions including metabolism, sleep, body temperature, blood pressure, endocrine, immune, cardiovascular, and renal function. Consists of two major components: the central clock, residing in the suprachiasmatic nucleus (SCN) of the brain, and the peripheral clocks that are present in nearly every tissue and organ system. Both the central and peripheral clocks can be reset by environmental cues, also known as Zeitgebers (German for 'timegivers'). The predominant Zeitgeber for the central clock is light, which is sensed by retina and signals directly to the SCN. The central clock entrains the peripheral clocks through neuronal and hormonal signals, body temperature and feeding-related cues, aligning all clocks with the external light/dark cycle. Circadian rhythms allow an organism to achieve temporal homeostasis with its environment at the molecular level by regulating gene expression to create a peak of protein expression once every 24 hours to control when a particular physiological process is most active with respect to the solar day. Transcription and translation of core clock components (CLOCK, NPAS2, BMAL1, BMAL2, PER1, PER2, PER3, CRY1 and CRY2) plays a critical role in rhythm generation, whereas delays imposed by post-translational modifications (PTMs) are important for determining the period (tau) of the rhythms (tau refers to the period of a rhythm and is the length, in time, of one complete cycle). A diurnal rhythm is synchronized with the day/night cycle, while the ultradian and infradian rhythms have a period shorter and longer than 24 hours, respectively. Disruptions in the circadian rhythms contribute to the pathology of cardiovascular diseases, cancer, metabolic syndromes and aging. A transcription/translation feedback loop (TTFL) forms the core of the molecular circadian clock mechanism. Transcription factors, CLOCK or NPAS2 and BMAL1 or BMAL2, form the positive limb of the feedback loop, act in the form of a heterodimer and activate the transcription of core clock genes and clock-controlled genes (involved in key metabolic processes), harboring E-box elements (5'-CACGTG-3') within their promoters. The core clock genes: PER1/2/3 and CRY1/2 which are transcriptional repressors form the negative limb of the feedback loop and interact with the CLOCK|NPAS2-BMAL1|BMAL2 heterodimer inhibiting its activity and thereby negatively regulating their own expression. This heterodimer also activates nuclear receptors NR1D1/2 and RORA/B/G, which form a second feedback loop and which activate and repress BMAL1 transcription, respectively. CRY1 and CRY2 have redundant functions but also differential and selective contributions at least in defining the pace of the SCN circadian clock and its circadian transcriptional outputs. More potent transcriptional repressor in cerebellum and liver than CRY2, though more effective in lengthening the period of the SCN oscillator. On its side, CRY2 seems to play a critical role in tuning SCN circadian period by opposing the action of CRY1. With CRY2, is dispensable for circadian rhythm generation but necessary for the development of intercellular networks for rhythm synchrony. Capable of translocating circadian clock core proteins such as PER proteins to the nucleus. Interacts with CLOCK-BMAL1 independently of PER proteins and is found at CLOCK-BMAL1-bound sites, suggesting that CRY may act as a molecular gatekeeper to maintain CLOCK-BMAL1 in a poised and repressed state until the proper time for transcriptional activation. Represses CLOCK-BMAL1-mediated transcriptional activation. The chain is Cryptochrome-1 (CRY1) from Gallus gallus (Chicken).